A 163-amino-acid polypeptide reads, in one-letter code: Large ribosomal subunit protein uL10 (163 aa).

It belongs to the universal ribosomal protein uL10 family. As to quaternary structure, part of the ribosomal stalk of the 50S ribosomal subunit. The N-terminus interacts with L11 and the large rRNA to form the base of the stalk. The C-terminus forms an elongated spine to which L12 dimers bind in a sequential fashion forming a multimeric L10(L12)X complex.

Functionally, forms part of the ribosomal stalk, playing a central role in the interaction of the ribosome with GTP-bound translation factors. The chain is Large ribosomal subunit protein uL10 from Histophilus somni (strain 129Pt) (Haemophilus somnus).